Here is a 635-residue protein sequence, read N- to C-terminus: MSGAIGGAEVHGFRGAAAQLPRSRVLGRPIRVAPPAAARPGGASAGSIRAVSAPAKKDASEVKRSKVEIIKEKSNFLRYPLNEELVSEAPNINESAVQLIKFHGSYQQTDRDVRGQKNYSFMLRTKNPCGKVPNQLYLAMDTLADEFGIGTLRLTTRQTFQLHGVLKKNLKTVLSTVIKNMGSTLGACGDLNRNVLAPAAPYVKKDILFAQQTAENIAALLTPQSGAYYDLWVDGEKIMSAEEPPEVTKARNDNSHGTNFPDSPEPIYGTQYLPRKFKVAVTAAGDNSVDILTNDIGVVVVSDDAGEPIGFNIYVGGGMGRTHRVETTFPRLADPLGYVPKEDILYAIKAIVVTQRENGRRDDRKYSRMKYMIDRWGIDRFRAEVEKYYGKKFESFRPLPEWQFNSYLGWQEQGDGKLFYGVHVDNGRVGGQAKKTLREIIEKYNLDVSITPNQNLILCGIDQAWREPITTALAQAGLLEPKDVDPLNLTAMACPALPLCPLAQTEAERGILPILKRIRAVFNKVGIKDSESVVVRITGCPNGCARPYMAELGFVGDGPKSYQIWLGGTPNQSTLAESFMDKVKLDDIEKVLEPLFTYWNGTRQEGESFGSFTNRTGFDKLKEVVNKWAESPSAA.

Residues methionine 1–alanine 50 constitute a chloroplast transit peptide. Disordered stretches follow at residues arginine 31–alanine 50 and proline 245–isoleucine 267. Positions proline 245 to asparagine 254 are enriched in basic and acidic residues. Residues cysteine 494, cysteine 500, cysteine 540, and cysteine 544 each contribute to the [4Fe-4S] cluster site. Cysteine 544 serves as a coordination point for siroheme.

It belongs to the nitrite and sulfite reductase 4Fe-4S domain family. As to quaternary structure, monomer. Interacts with ferredoxin. It depends on siroheme as a cofactor. [4Fe-4S] cluster is required as a cofactor. In terms of processing, phosphorylated; this phosphorylation reduces DNA-binding. In terms of tissue distribution, present in roots and leaves (at protein level). In leaves, sulfite reductase activity is detected in both bundle sheath and mesophyll cell types.

The protein resides in the plastid. Its subcellular location is the chloroplast stroma. The protein localises to the chloroplast nucleoid. It localises to the plastid stroma. The enzyme catalyses hydrogen sulfide + 6 oxidized [2Fe-2S]-[ferredoxin] + 3 H2O = sulfite + 6 reduced [2Fe-2S]-[ferredoxin] + 7 H(+). Its activity is regulated as follows. Inhibited by the tryptophan-modifying reagent, N-bromosuccinimide (NBS), by the lysine-modifying reagent, N-acetylsuccinimide and by the arginine-modifying reagent, phenylglyoxal. Complex formation with ferredoxin prevents these inhibitions. Functionally, essential protein with sulfite reductase activity required in assimilatory sulfate reduction pathway during both primary and secondary metabolism and thus involved in development and growth. In terms of biological role, DNA-binding protein that binds to both double-stranded and single-stranded DNA without significant sequence specificity to reversibly repress the transcriptional activity of chloroplast nucleoids by promoting DNA compaction and possibly regulate DNA replication. This Zea mays (Maize) protein is Sulfite reductase [ferredoxin], chloroplastic (SIR).